We begin with the raw amino-acid sequence, 728 residues long: MKELFQKIWQNELQFLNFDAKFQDKSKLDTAECAIILSVNKDNYERYFLLKEFQELCKKIDLRVDIFSMQNAQICILNLFKSGFISKQDLLKALKILEKISKNTEIFDFILQEKVQSIDQKALFQNDFKELNTINLELQKLSFDENLKSRLQKTLEKFQNLEFNIAITGVMNAGKSSLLNALLKEDFLGVSNIPETANLTVLSYGKSEEAKIYFWDKKEWQNILESSHFNADLKEFIDKLDKSVNIEDFIKDKPLIQNIALCELKNFSSAKNKISALIKKIEIKSHLEFLKNNISIVDTPGLDDVVVQREIVTNEYLRESDFLIHLMNASQSLTQKDADFLVHCLLNSRLSKFLIVLTKADLLSKKDLEEVIVYTKESLKSRLVDLDENLVEKIDFLCVSAKMASDFYKGLASKESLQKSGMQEFENYLFNELYAGEKSKIALRAYKKELHLELKNILSEYEMQNRLIKENKQGVSEENQKLLLELQKQNTLLKEAQDEISNSIAKLKNIDSGIDNLVLLLAKKLKERLIDEFKYLKNNAQKLNLSRILNIVDITTKDGINDILREIKFENIKKIEELKTNLSLKYDFLKDDFDNGFEGFKDGISKNIDSIFQSEKFALLRLKIEKLSNLKSDLYELETNLDTVIFDTFKEFKMSEILNSLNINGAFFEFLNDKLKHYEKNQKSKLESLEKVLQSLKNQDANILNSFEENLEKIEKLKQLEMGLLNAD.

The assembly domain, required for tetramerization stretch occupies residues 1 to 119; that stretch reads MKELFQKIWQ…ILQEKVQSID (119 aa). The Dynamin-type G domain occupies 159 to 442; sequence QNLEFNIAIT…LYAGEKSKIA (284 aa). The interval 169-176 is G1 motif; that stretch reads GVMNAGKS. Residue 171–177 participates in GDP binding; that stretch reads MNAGKSS. The interval 195–196 is G2 motif; the sequence is ET. Residues 298-301 are G3 motif; sequence DTPG. Residues 358 to 361 are G4 motif; it reads TKAD. Lysine 359 is a GDP binding site. Glutamate 388 is a region of interest (G5 motif). 400-402 is a GDP binding site; it reads SAK. A required for liposome binding but not for tetramerization region spans residues 470–695; it reads ENKQGVSEEN…LESLEKVLQS (226 aa).

This sequence belongs to the TRAFAC class dynamin-like GTPase superfamily. Dynamin/Fzo/YdjA family. As to quaternary structure, forms a 2:2 heterotetramer with DLP1. DLP2 forms a central back-to-back dimer flanked on each side by a DLP1 subunit. In the crystal structures the 2 DLP1 subunits are in very different conformations.

It localises to the cytoplasm. Its subcellular location is the cytosol. It catalyses the reaction GTP + H2O = GDP + phosphate + H(+). The heterotetrameric DLP1(2)-DLP2(2) complex tethers liposomes and may mediate their fusion. Initial binding is probably mediated by DLP1, while DLP2 couples DLP1 subunits and increases the effective reach of the complex up to 45 nm. The role of the nucleotide is unknown. This subunit alone weakly binds to liposomes; GTP, GDP, GMPPCP and GMPPNP do not change heterotetramer binding. Tetramerization is required for GTPase activity, suggesting the GTPase domains (dynamin-type G) from DLP1 and DLP2 must dimerize to reconstitute the GTPase active site. This chain is Dynamin-like protein 1, found in Campylobacter jejuni subsp. jejuni serotype O:23/36 (strain 81-176).